Consider the following 139-residue polypeptide: Small ribosomal subunit protein uS11 (139 aa).

It belongs to the universal ribosomal protein uS11 family. In terms of assembly, part of the 30S ribosomal subunit.

Located on the platform of the 30S subunit. The chain is Small ribosomal subunit protein uS11 from Pyrobaculum islandicum (strain DSM 4184 / JCM 9189 / GEO3).